Consider the following 60-residue polypeptide: Large ribosomal subunit protein uL30 (60 aa).

The protein belongs to the universal ribosomal protein uL30 family. As to quaternary structure, part of the 50S ribosomal subunit.

The protein is Large ribosomal subunit protein uL30 of Ralstonia pickettii (strain 12J).